Consider the following 502-residue polypeptide: Cytochrome P450 monooxygenase AacuE (502 aa).

Residues 4-26 (AITGLVATVTTFLAYIVFLSYTP) form a helical membrane-spanning segment. The N-linked (GlcNAc...) asparagine glycan is linked to N393. C439 contributes to the heme binding site.

Belongs to the cytochrome P450 family. The cofactor is heme.

It localises to the membrane. The protein operates within secondary metabolite biosynthesis. In terms of biological role, cytochrome P450 monooxygenase; part of the gene cluster that mediates the biosynthesis of the tetrahydroxanthone dimer secalonic acid D. The pathway begins with the synthesis of atrochrysone thioester by the polyketide synthase AacuL. The atrochrysone carboxyl ACP thioesterase AacuM then breaks the thioester bond and releases the atrochrysone carboxylic acid from AacuL. Atrochrysone carboxylic acid is decarboxylated by the decarboxylase AacuI, and oxidized by the anthrone oxygenase AacuG to yield emodin. Emodin is then reduced to emodin hydroquinone by a yet unidentified oxidoreductase. A-ring reduction by the short chain dehydrogenase AacuN, dehydration by the scytalone dehydratase-like protein AacuK and probable spontaneous re-oxidation, results in overall deoxygenation to chrysophanol. Baeyer-Villiger oxidation by the Baeyer-Villiger monooxygenase (BVMO) AacuH then yields monodictyphenone. Monodictyphenone is transformed into compounds with the tetrahydroxanthone skeleton via methylesterification by the methyltransferase AacuQ, followed by the action of the flavin-dependent monooxygenase AacuC, the isomerase AacuP, and the short chain dehydrogenase/reductase AacuF or AacuD. AacuF and AacuD should accept the same compound as a substrate but perform the ketoreduction with a different stereoselectivity, thus yielding blennolides B and A, respectively. In the final step of the biosynthesis, the cytochrome P450 monooxygenase AacuE accepts blennolide B and/or blennolide A to conduct the dimerization reaction to furnish the tetrahydroxanthone dimers, secalonic acids D, B, and F. This is Cytochrome P450 monooxygenase AacuE from Aspergillus aculeatus (strain ATCC 16872 / CBS 172.66 / WB 5094).